The chain runs to 397 residues: (S)-8-oxocitronellyl enol synthase ISY2 (397 aa).

NADP(+)-binding positions include 36–38 (TGL), 64–65 (RR), 82–83 (DV), 106–107 (TW), Q144, Y180, I207, and 214–216 (SMM). Y180 is a catalytic residue.

Belongs to the short-chain dehydrogenases/reductases (SDR) family.

It carries out the reaction (S)-8-oxocitronellyl enol + NADP(+) = (6E)-8-oxogeranial + NADPH + H(+). The enzyme catalyses (S)-8-oxocitronellyl enol + NAD(+) = (6E)-8-oxogeranial + NADH + H(+). Its function is as follows. Iridoid synthase that catalyzes the first step in generation of the iridoid ring scaffold using the linear monoterpene (6E)-8-oxogeranial as substrate. Iridoids comprise a large family of distinctive bicyclic monoterpenes that possess a wide range of pharmacological activities, including anticancer, anti-inflammatory, antifungal and antibacterial activities. Catalyzes the conversion of the linear monoterpene (6E)-8-oxogeranial to (S)-8-oxocitronellyl enol, a precursor of nepetalactones, which are metabolites that are both insect-repellent and have euphoric effect in cats. This chain is (S)-8-oxocitronellyl enol synthase ISY2, found in Nepeta cataria (Catnip).